A 636-amino-acid polypeptide reads, in one-letter code: MSKVIGIDLGTTNSCVAIMEGGEPIVIANAEGSRTTPSMVAITDSGERLVGQQAKRQAVTNPENTLFAIKRLIGRKFESEAVKKDIAISPFKIVKADNADAWVEVRGQKYSPPEISAMVLQKMKKTAEDYLGETVTDAVITVPAYFDDSQRQATKDAGKIAGLNVLRIINEPTAAALAYGLDKKKDEKIAVFDLGGGTFDISILELGEGVFEVKSTNGDTFLGGEDFDQNVIDWIADEFKKDQGIDLRNDKMALQRLKEAAEKAKCELSSSMETDINLPFITADASGPKHLNLKLTRAKLEAICANLIDKLEGPCRTALKDAGLSPSDIDEVILVGGMTRMPIVQKRVQDIFGKVPNRGVNPDEVVAIGAAIQGGVLKGDVKDVLLLDVTPLSLGIETLGGVMTRLIEKNSTIPCRKSQIFSTAADNQPAVSIHVLQGEREMAGDNKTLGNFELTGIPAAPRGVPQIEVTFDIDANGIVHVSAKDLGTGKEQSIRITASSGLSKEEIDKMVREAESHASEDKKKRELIEARNQADSLVYSTEKSLSEFGDKIDAAEKQKIEEGLAALKKAMEGNDADAIKKASDELMQASHKLAEAVYAKAQPAGEEQAGAAAHEGEAKGEKVVDADFEEVKEDKK.

Threonine 198 carries the post-translational modification Phosphothreonine; by autocatalysis. Low complexity predominate over residues 602-613 (QPAGEEQAGAAA). Residues 602–636 (QPAGEEQAGAAAHEGEAKGEKVVDADFEEVKEDKK) form a disordered region. Residues 614-625 (HEGEAKGEKVVD) are compositionally biased toward basic and acidic residues. Positions 626–636 (ADFEEVKEDKK) are enriched in acidic residues.

The protein belongs to the heat shock protein 70 family.

Acts as a chaperone. The protein is Chaperone protein DnaK of Geotalea daltonii (strain DSM 22248 / JCM 15807 / FRC-32) (Geobacter daltonii).